Here is a 153-residue protein sequence, read N- to C-terminus: Glutamyl-tRNA(Gln) amidotransferase subunit C, mitochondrial (153 aa).

Residues 31-55 form a disordered region; it reads HPTKVPQQPEPNAFPDLDNNTDDDP.

This sequence belongs to the GatC family. As to quaternary structure, subunit of the heterotrimeric GatCAB amidotransferase (AdT) complex, composed of A, B and C subunits.

It localises to the mitochondrion. The catalysed reaction is L-glutamyl-tRNA(Gln) + L-glutamine + ATP + H2O = L-glutaminyl-tRNA(Gln) + L-glutamate + ADP + phosphate + H(+). Functionally, allows the formation of correctly charged Gln-tRNA(Gln) through the transamidation of misacylated Glu-tRNA(Gln) in the mitochondria. The reaction takes place in the presence of glutamine and ATP through an activated gamma-phospho-Glu-tRNA(Gln). This is Glutamyl-tRNA(Gln) amidotransferase subunit C, mitochondrial from Drosophila willistoni (Fruit fly).